The primary structure comprises 188 residues: Elongation factor P (188 aa).

Lys-34 is modified (N6-(3,6-diaminohexanoyl)-5-hydroxylysine).

It belongs to the elongation factor P family. In terms of processing, may be beta-lysylated on the epsilon-amino group of Lys-34 by the combined action of EpmA and EpmB, and then hydroxylated on the C5 position of the same residue by EpmC (if this protein is present). Lysylation is critical for the stimulatory effect of EF-P on peptide-bond formation. The lysylation moiety may extend toward the peptidyltransferase center and stabilize the terminal 3-CCA end of the tRNA. Hydroxylation of the C5 position on Lys-34 may allow additional potential stabilizing hydrogen-bond interactions with the P-tRNA.

The protein localises to the cytoplasm. It functions in the pathway protein biosynthesis; polypeptide chain elongation. Its function is as follows. Involved in peptide bond synthesis. Alleviates ribosome stalling that occurs when 3 or more consecutive Pro residues or the sequence PPG is present in a protein, possibly by augmenting the peptidyl transferase activity of the ribosome. Modification of Lys-34 is required for alleviation. This Proteus mirabilis (strain HI4320) protein is Elongation factor P.